Consider the following 231-residue polypeptide: ATP-dependent dethiobiotin synthetase BioD (231 aa).

12 to 17 contributes to the ATP binding site; sequence EVGKTV. Thr-16 contributes to the Mg(2+) binding site. The active site involves Lys-37. Residue Ser-41 participates in substrate binding. ATP contacts are provided by residues Asp-51, 112-115, and 202-204; these read EGAG and PKL. 2 residues coordinate Mg(2+): Asp-51 and Glu-112.

This sequence belongs to the dethiobiotin synthetase family. As to quaternary structure, homodimer. Requires Mg(2+) as cofactor.

The protein localises to the cytoplasm. It carries out the reaction (7R,8S)-7,8-diammoniononanoate + CO2 + ATP = (4R,5S)-dethiobiotin + ADP + phosphate + 3 H(+). The protein operates within cofactor biosynthesis; biotin biosynthesis; biotin from 7,8-diaminononanoate: step 1/2. Catalyzes a mechanistically unusual reaction, the ATP-dependent insertion of CO2 between the N7 and N8 nitrogen atoms of 7,8-diaminopelargonic acid (DAPA, also called 7,8-diammoniononanoate) to form a ureido ring. This Bacillus subtilis (strain 168) protein is ATP-dependent dethiobiotin synthetase BioD.